Consider the following 257-residue polypeptide: Imidazole glycerol phosphate synthase subunit HisF (257 aa).

Catalysis depends on residues Asp11 and Asp130.

It belongs to the HisA/HisF family. In terms of assembly, heterodimer of HisH and HisF.

The protein resides in the cytoplasm. It carries out the reaction 5-[(5-phospho-1-deoxy-D-ribulos-1-ylimino)methylamino]-1-(5-phospho-beta-D-ribosyl)imidazole-4-carboxamide + L-glutamine = D-erythro-1-(imidazol-4-yl)glycerol 3-phosphate + 5-amino-1-(5-phospho-beta-D-ribosyl)imidazole-4-carboxamide + L-glutamate + H(+). It participates in amino-acid biosynthesis; L-histidine biosynthesis; L-histidine from 5-phospho-alpha-D-ribose 1-diphosphate: step 5/9. In terms of biological role, IGPS catalyzes the conversion of PRFAR and glutamine to IGP, AICAR and glutamate. The HisF subunit catalyzes the cyclization activity that produces IGP and AICAR from PRFAR using the ammonia provided by the HisH subunit. The protein is Imidazole glycerol phosphate synthase subunit HisF of Shewanella sediminis (strain HAW-EB3).